The primary structure comprises 99 residues: Nucleoid-associated protein UPA3_0088 (99 aa).

This sequence belongs to the YbaB/EbfC family. In terms of assembly, homodimer.

The protein resides in the cytoplasm. It is found in the nucleoid. Its function is as follows. Binds to DNA and alters its conformation. May be involved in regulation of gene expression, nucleoid organization and DNA protection. The sequence is that of Nucleoid-associated protein UPA3_0088 from Ureaplasma parvum serovar 3 (strain ATCC 27815 / 27 / NCTC 11736).